We begin with the raw amino-acid sequence, 139 residues long: Low molecular weight protein-tyrosine-phosphatase PtpB (139 aa).

The active-site Nucleophile is the C7. R13 is a catalytic residue. Catalysis depends on D111, which acts as the Proton donor.

It belongs to the low molecular weight phosphotyrosine protein phosphatase family.

It catalyses the reaction O-phospho-L-tyrosyl-[protein] + H2O = L-tyrosyl-[protein] + phosphate. Its activity is regulated as follows. Inhibited by N-ethylmaleimide and sodium orthovanadate. Its function is as follows. Dephosphorylates the phosphotyrosine-containing proteins. This chain is Low molecular weight protein-tyrosine-phosphatase PtpB (ptpB), found in Staphylococcus aureus.